The sequence spans 142 residues: Galactose-6-phosphate isomerase subunit LacA (142 aa).

It belongs to the LacAB/RpiB family. In terms of assembly, heteromultimeric protein consisting of LacA and LacB.

The enzyme catalyses aldehydo-D-galactose 6-phosphate = keto-D-tagatose 6-phosphate. The protein operates within carbohydrate metabolism; D-galactose 6-phosphate degradation; D-tagatose 6-phosphate from D-galactose 6-phosphate: step 1/1. The chain is Galactose-6-phosphate isomerase subunit LacA from Staphylococcus epidermidis (strain ATCC 35984 / DSM 28319 / BCRC 17069 / CCUG 31568 / BM 3577 / RP62A).